A 340-amino-acid polypeptide reads, in one-letter code: Ketol-acid reductoisomerase (NADP(+)) (340 aa).

A KARI N-terminal Rossmann domain is found at 1–183; sequence MAITVYYDKD…GGGRTGIIET (183 aa). Residues 26–29, arginine 49, serine 52, serine 54, and 84–87 contribute to the NADP(+) site; these read FGSQ and DEIQ. Residue histidine 109 is part of the active site. Position 135 (glycine 135) interacts with NADP(+). Residues 184–329 enclose the KARI C-terminal knotted domain; it reads TFKAETETDL…RNLRAMMPWI (146 aa). Residues aspartate 192, glutamate 196, glutamate 228, and glutamate 232 each coordinate Mg(2+). Position 253 (serine 253) interacts with substrate.

It belongs to the ketol-acid reductoisomerase family. Requires Mg(2+) as cofactor.

The catalysed reaction is (2R)-2,3-dihydroxy-3-methylbutanoate + NADP(+) = (2S)-2-acetolactate + NADPH + H(+). It carries out the reaction (2R,3R)-2,3-dihydroxy-3-methylpentanoate + NADP(+) = (S)-2-ethyl-2-hydroxy-3-oxobutanoate + NADPH + H(+). The protein operates within amino-acid biosynthesis; L-isoleucine biosynthesis; L-isoleucine from 2-oxobutanoate: step 2/4. It functions in the pathway amino-acid biosynthesis; L-valine biosynthesis; L-valine from pyruvate: step 2/4. Its function is as follows. Involved in the biosynthesis of branched-chain amino acids (BCAA). Catalyzes an alkyl-migration followed by a ketol-acid reduction of (S)-2-acetolactate (S2AL) to yield (R)-2,3-dihydroxy-isovalerate. In the isomerase reaction, S2AL is rearranged via a Mg-dependent methyl migration to produce 3-hydroxy-3-methyl-2-ketobutyrate (HMKB). In the reductase reaction, this 2-ketoacid undergoes a metal-dependent reduction by NADPH to yield (R)-2,3-dihydroxy-isovalerate. This is Ketol-acid reductoisomerase (NADP(+)) from Campylobacter jejuni subsp. jejuni serotype O:23/36 (strain 81-176).